Here is a 614-residue protein sequence, read N- to C-terminus: Phosphomethylpyrimidine synthase (614 aa).

Substrate is bound by residues asparagine 226, methionine 255, tyrosine 284, histidine 320, 340–342 (SRG), 381–384 (DGLR), and glutamate 420. Residue histidine 424 participates in Zn(2+) binding. Residue tyrosine 447 coordinates substrate. A Zn(2+)-binding site is contributed by histidine 488. Residues cysteine 568, cysteine 571, and cysteine 576 each coordinate [4Fe-4S] cluster.

Belongs to the ThiC family. Homodimer. Requires [4Fe-4S] cluster as cofactor.

It catalyses the reaction 5-amino-1-(5-phospho-beta-D-ribosyl)imidazole + S-adenosyl-L-methionine = 4-amino-2-methyl-5-(phosphooxymethyl)pyrimidine + CO + 5'-deoxyadenosine + formate + L-methionine + 3 H(+). It functions in the pathway cofactor biosynthesis; thiamine diphosphate biosynthesis. In terms of biological role, catalyzes the synthesis of the hydroxymethylpyrimidine phosphate (HMP-P) moiety of thiamine from aminoimidazole ribotide (AIR) in a radical S-adenosyl-L-methionine (SAM)-dependent reaction. This chain is Phosphomethylpyrimidine synthase, found in Acidovorax sp. (strain JS42).